The sequence spans 211 residues: 2,3-bisphosphoglycerate-dependent phosphoglycerate mutase (211 aa).

Substrate-binding positions include Arg9–Asn16, Thr22–Gly23, Arg61, Glu88–Tyr91, Lys99, Arg115–Arg116, and Gly159–Asn160. His10 (tele-phosphohistidine intermediate) is an active-site residue. Glu88 acts as the Proton donor/acceptor in catalysis.

It belongs to the phosphoglycerate mutase family. BPG-dependent PGAM subfamily. As to quaternary structure, homodimer.

The enzyme catalyses (2R)-2-phosphoglycerate = (2R)-3-phosphoglycerate. The protein operates within carbohydrate degradation; glycolysis; pyruvate from D-glyceraldehyde 3-phosphate: step 3/5. Catalyzes the interconversion of 2-phosphoglycerate and 3-phosphoglycerate. This is 2,3-bisphosphoglycerate-dependent phosphoglycerate mutase from Sinorhizobium fredii (strain NBRC 101917 / NGR234).